The chain runs to 333 residues: N-acetyl-gamma-glutamyl-phosphate reductase (333 aa).

The active site involves C136.

The protein belongs to the NAGSA dehydrogenase family. Type 1 subfamily.

The protein localises to the cytoplasm. It catalyses the reaction N-acetyl-L-glutamate 5-semialdehyde + phosphate + NADP(+) = N-acetyl-L-glutamyl 5-phosphate + NADPH + H(+). It functions in the pathway amino-acid biosynthesis; L-arginine biosynthesis; N(2)-acetyl-L-ornithine from L-glutamate: step 3/4. Its function is as follows. Catalyzes the NADPH-dependent reduction of N-acetyl-5-glutamyl phosphate to yield N-acetyl-L-glutamate 5-semialdehyde. The chain is N-acetyl-gamma-glutamyl-phosphate reductase from Xylella fastidiosa (strain 9a5c).